A 27-amino-acid chain; its full sequence is Small integral membrane protein 43 (27 aa).

The segment at 15–21 (HREPWGF) is important for interaction with SLC2A1 and SLC2A3.

In terms of assembly, interacts with glucose transporters SLC2A1/GLUT1 and SLC2A3/GLUT3; the interactions may promote SLC2A1- and SLC2A3-mediated glucose transport to meet the energy needs of mesendoderm differentiation.

The protein localises to the cell membrane. In terms of biological role, required for mesendoderm differentiation. Interacts with glucose transporters and promotes glucose uptake. Probably augments the glucose uptake capacity of glucose transporter proteins to meet the energy needs of mesendoderm differentiation. The sequence is that of Small integral membrane protein 43 from Pongo abelii (Sumatran orangutan).